The chain runs to 112 residues: Large ribosomal subunit protein eL33y (112 aa).

The protein belongs to the eukaryotic ribosomal protein eL33 family.

The chain is Large ribosomal subunit protein eL33y (RPL35AC) from Arabidopsis thaliana (Mouse-ear cress).